A 573-amino-acid polypeptide reads, in one-letter code: Probable D-xylulose kinase A (573 aa).

Substrate contacts are provided by His-100, Arg-171, Asp-287, and Asn-288. Residues Trp-368, 473-474 (GG), and Asn-477 contribute to the ATP site.

The protein belongs to the FGGY kinase family.

Its subcellular location is the cytoplasm. The catalysed reaction is D-xylulose + ATP = D-xylulose 5-phosphate + ADP + H(+). Highly specific D-xylulose kinase which participates in the catabolism of xylose. Xylose is a major component of hemicelluloses such as xylan. Most fungi utilize D-xylose via three enzymatic reactions, xylose reductase (XR), xylitol dehydrogenase (XDH), and xylulokinase, to form xylulose 5-phosphate, which enters pentose phosphate pathway. The polypeptide is Probable D-xylulose kinase A (xkiA) (Aspergillus terreus (strain NIH 2624 / FGSC A1156)).